The sequence spans 851 residues: DNA mismatch repair protein MutS (851 aa).

602–609 (GPNMSGKS) is a binding site for ATP.

Belongs to the DNA mismatch repair MutS family.

In terms of biological role, this protein is involved in the repair of mismatches in DNA. It is possible that it carries out the mismatch recognition step. This protein has a weak ATPase activity. The polypeptide is DNA mismatch repair protein MutS (Streptococcus pyogenes serotype M3 (strain SSI-1)).